Reading from the N-terminus, the 1170-residue chain is Cellulose synthase-like protein D2 (1170 aa).

Disordered regions lie at residues 1-48 (MASS…RRTH), 54-73 (SYSRDDLDSELGNSGDMSPE), and 269-295 (NEVDNGGGGGGGGGLGGGDGQPAEFTS). A compositionally biased stretch (low complexity) spans 10-24 (RHSNSSRLSRMSYSG). Residues 273–288 (NGGGGGGGGGLGGGDG) are compositionally biased toward gly residues. 2 helical membrane-spanning segments follow: residues 311 to 331 (VLSPYRLLILIRMAVLGLFLA) and 341 to 361 (AMWLWGMSVVCELWFGLSWLL). The active site involves D441. A coiled-coil region spans residues 527–551 (HAREEIKAMKRQREAALDDVVEAVK). D873 is a catalytic residue. The next 6 membrane-spanning stretches (helical) occupy residues 955-975 (IFLIVYCFLPALSLFSGQFIV), 981-1001 (TFLTYLLVITLTMCMLAVLEI), 1027-1047 (LAAVLQGLLKVIAGIEISFTL), 1070-1090 (SLMIPPIVIMMVNLIAIAVGF), 1104-1124 (LLGGVFFSFWVLAHLYPFAKG), and 1134-1154 (TIVFVWSGLLAITISLLWVAI).

The protein belongs to the glycosyltransferase 2 family. Plant cellulose synthase-like D subfamily.

The protein localises to the golgi apparatus membrane. Its function is as follows. Thought to be a Golgi-localized beta-glycan synthase that polymerize the backbones of noncellulosic polysaccharides (hemicelluloses) of plant cell wall. In Oryza sativa subsp. japonica (Rice), this protein is Cellulose synthase-like protein D2 (CSLD2).